The following is a 482-amino-acid chain: Ras GTPase-activating protein-binding protein 2 (482 aa).

The 123-residue stretch at 11–133 folds into the NTF2 domain; that stretch reads VGREFVRQYY…FYVHNDMFRY (123 aa). Residues 140 to 158 show a composition bias toward acidic residues; it reads DSEPELDEESEDEVEEEQE. Disordered regions lie at residues 140–170 and 187–318; these read DSEP…VQEN and EPLE…EQND. 3 positions are modified to phosphoserine: serine 141, serine 149, and serine 225. Positions 142 to 220 are acidic disordered region; that stretch reads EPELDEESED…PQVEEKHLEE (79 aa). Positions 191-225 are enriched in basic and acidic residues; the sequence is ESSHEPEPEPESETKTEELKPQVEEKHLEELEEKS. A Phosphothreonine modification is found at threonine 227. Positions 247 to 264 are enriched in polar residues; sequence ASVTSKNLPPSGTVSSSG. A Glycyl lysine isopeptide (Lys-Gly) (interchain with G-Cter in SUMO2) cross-link involves residue lysine 281. A compositionally biased stretch (basic and acidic residues) spans 290 to 300; the sequence is RVREQRPRERP. The RRM domain maps to 331-409; that stretch reads HQLFVGNLPH…VRLNVEEKKT (79 aa). Lysine 392 is modified (N6-succinyllysine). The interval 404 to 476 is RG-rich region; that stretch reads VEEKKTRAAR…GRGTGQMEGR (73 aa). Basic and acidic residues predominate over residues 408–432; the sequence is KTRAARERETRGGGDDRRDIRRNDR. A disordered region spans residues 408-482; it reads KTRAARERET…MEGRFTGQRR (75 aa). Residues 433-445 are compositionally biased toward gly residues; that stretch reads GPGGPRGIVGGGM. Arginine 457 bears the Omega-N-methylarginine mark. Residue serine 466 is modified to Phosphoserine. The residue at position 468 (arginine 468) is an Omega-N-methylarginine.

Forms homooligomers. Forms heterodimers with G3BP1. Interacts with NFKBIA (via N-terminus). Interacts (via NTF2 domain) with USP10; inhibiting stress granule formation. Interacts (via NTF2 domain) with CAPRIN1; promoting stress granule formation. Associates (via RG-rich region) with 40S ribosome subunits. Interacts with PABPC1.

It localises to the cytoplasm. The protein localises to the stress granule. Under physiological conditions, G3BP2 adopts a compact state that is stabilized by intramolecular interactions between the RG-rich and the acidic regions that inhibit phase separation. Upon stress, polysomes disassemble and mRNAs are released in an unfolded protein-free state. Binding of unfolded mRNA to G3BP2 outcompetes the intramolecular interactions and RNA-bound G3BP2 adopts an expanded conformation in which the RG-rich region becomes exposed to engage in protein-protein and protein-RNA interactions, allowing physical cross-linking of RNA molecules to form protein-RNA condensates, leading to liquid-liquid phase separation (LLPS). In terms of biological role, scaffold protein that plays an essential role in cytoplasmic stress granule formation which acts as a platform for antiviral signaling. Plays an essential role in stress granule formation. Stress granules are membraneless compartments that store mRNAs and proteins, such as stalled translation pre-initiation complexes, in response to stress. Promotes formation of stress granules phase-separated membraneless compartment by undergoing liquid-liquid phase separation (LLPS) upon unfolded RNA-binding: functions as a molecular switch that triggers RNA-dependent LLPS in response to a rise in intracellular free RNA concentrations. The chain is Ras GTPase-activating protein-binding protein 2 (G3bp2) from Mus musculus (Mouse).